The sequence spans 449 residues: CBL-interacting protein kinase 31 (449 aa).

The Protein kinase domain maps to 20–275 (YELGRTIGEG…ISQILEDPWF (256 aa)). ATP-binding positions include 26-34 (IGEGTFAKV) and Lys49. The active-site Proton acceptor is Asp143. The interval 161-190 (DFGLSALTEQVKADGLLHTTCGTPNYVAPE) is activation loop. The NAF domain maps to 313–337 (DQPTSMNAFELISLNQALNLDNLFE).

This sequence belongs to the protein kinase superfamily. CAMK Ser/Thr protein kinase family. SNF1 subfamily. In terms of assembly, may interact with CBL3. It depends on Mn(2+) as a cofactor. Autophosphorylated. As to expression, highly expressed in leaf blade and leaf sheath, but not in other tissues.

It carries out the reaction L-seryl-[protein] + ATP = O-phospho-L-seryl-[protein] + ADP + H(+). The enzyme catalyses L-threonyl-[protein] + ATP = O-phospho-L-threonyl-[protein] + ADP + H(+). Involved in cold stress tolerance. CIPK serine-threonine protein kinases interact with CBL proteins. Binding of a CBL protein to the regulatory NAF domain of CIPK protein lead to the activation of the kinase in a calcium-dependent manner. This chain is CBL-interacting protein kinase 31 (CIPK31), found in Oryza sativa subsp. japonica (Rice).